Reading from the N-terminus, the 325-residue chain is Thiamine-monophosphate kinase (325 aa).

The Mg(2+) site is built by aspartate 30, serine 45, threonine 46, and aspartate 47. Histidine 54 is a binding site for substrate. Mg(2+)-binding residues include aspartate 75 and aspartate 122. Residues 121 to 122 (GD) and arginine 146 each bind ATP. Aspartate 212 contacts Mg(2+). Residue serine 214 participates in ATP binding. Aspartate 215 is a Mg(2+) binding site. 2 residues coordinate substrate: glutamate 263 and tyrosine 319.

The protein belongs to the thiamine-monophosphate kinase family.

It catalyses the reaction thiamine phosphate + ATP = thiamine diphosphate + ADP. The protein operates within cofactor biosynthesis; thiamine diphosphate biosynthesis; thiamine diphosphate from thiamine phosphate: step 1/1. Functionally, catalyzes the ATP-dependent phosphorylation of thiamine-monophosphate (TMP) to form thiamine-pyrophosphate (TPP), the active form of vitamin B1. The protein is Thiamine-monophosphate kinase of Escherichia coli O157:H7.